We begin with the raw amino-acid sequence, 203 residues long: CASP-like protein 2U5 (203 aa).

Residues 1-31 (MSEHRIPVAADKQISPPISAGEQKGCKGLKR) are Cytoplasmic-facing. Residues 32–52 (TDLMLRFAAFVCCAVTMVVLI) traverse the membrane as a helical segment. The Extracellular portion of the chain corresponds to 53–84 (TDKQTSAIQVPGFNNLTITKTVSFDLAKAFVY). Residue asparagine 67 is glycosylated (N-linked (GlcNAc...) asparagine). Residues 85 to 105 (LVSAAGIGAGYTLLVLVLSII) traverse the membrane as a helical segment. The Cytoplasmic segment spans residues 106–111 (SAERSK). Residues 112–132 (AIAWFIFVFDQLITYVLLAAA) form a helical membrane-spanning segment. The Extracellular segment spans residues 133-164 (AASTEVAYMGAHAPPEASWLKVCSLFGRFCHQ). The helical transmembrane segment at 165 to 185 (LGASLVTSFISTVLFAFSAAI) threads the bilayer. Residues 186–203 (SAYYLFSNTNVRPAYSKG) are Cytoplasmic-facing.

The protein belongs to the Casparian strip membrane proteins (CASP) family. As to quaternary structure, homodimer and heterodimers.

It localises to the cell membrane. In Selaginella moellendorffii (Spikemoss), this protein is CASP-like protein 2U5.